The sequence spans 400 residues: Argininosuccinate synthase (400 aa).

ATP contacts are provided by residues 10–18 (AYSGGVDTS) and alanine 38. Tyrosine 89 contributes to the L-citrulline binding site. ATP is bound at residue glycine 119. 3 residues coordinate L-aspartate: threonine 121, asparagine 125, and aspartate 126. Residue asparagine 125 participates in L-citrulline binding. Residues arginine 129, serine 177, serine 186, glutamate 262, and tyrosine 274 each contribute to the L-citrulline site.

Belongs to the argininosuccinate synthase family. Type 1 subfamily. As to quaternary structure, homotetramer.

The protein localises to the cytoplasm. It carries out the reaction L-citrulline + L-aspartate + ATP = 2-(N(omega)-L-arginino)succinate + AMP + diphosphate + H(+). It functions in the pathway amino-acid biosynthesis; L-arginine biosynthesis; L-arginine from L-ornithine and carbamoyl phosphate: step 2/3. This is Argininosuccinate synthase from Nostoc punctiforme (strain ATCC 29133 / PCC 73102).